Consider the following 101-residue polypeptide: Large ribosomal subunit protein uL24 (101 aa).

It belongs to the universal ribosomal protein uL24 family. In terms of assembly, part of the 50S ribosomal subunit.

Its function is as follows. One of two assembly initiator proteins, it binds directly to the 5'-end of the 23S rRNA, where it nucleates assembly of the 50S subunit. In terms of biological role, one of the proteins that surrounds the polypeptide exit tunnel on the outside of the subunit. The chain is Large ribosomal subunit protein uL24 from Streptococcus gordonii (strain Challis / ATCC 35105 / BCRC 15272 / CH1 / DL1 / V288).